The sequence spans 426 residues: PI-PLC X domain-containing protein At5g67130 (426 aa).

A signal peptide spans 1–28 (MSACINGLCRAVTVSLLLLLLSFSFSSA). Residues 76-232 (IINGLPFNKY…MVQENHRLLV (157 aa)) enclose the PI-PLC X-box domain. N-linked (GlcNAc...) asparagine glycosylation is found at N151 and N255. The interval 258–277 (GDPGVKRGSCPNRKESQPLN) is disordered. N-linked (GlcNAc...) asparagine glycosylation occurs at N370. Residue S404 is the site of GPI-anchor amidated serine attachment. A propeptide spans 405–426 (VAQLNNIVVFCFSLLPLLIFLL) (removed in mature form).

Its subcellular location is the cell membrane. The polypeptide is PI-PLC X domain-containing protein At5g67130 (Arabidopsis thaliana (Mouse-ear cress)).